Here is a 117-residue protein sequence, read N- to C-terminus: Peptidyl-tRNA hydrolase (117 aa).

The protein belongs to the PTH2 family.

It is found in the cytoplasm. The catalysed reaction is an N-acyl-L-alpha-aminoacyl-tRNA + H2O = an N-acyl-L-amino acid + a tRNA + H(+). Its function is as follows. The natural substrate for this enzyme may be peptidyl-tRNAs which drop off the ribosome during protein synthesis. This is Peptidyl-tRNA hydrolase from Thermoplasma volcanium (strain ATCC 51530 / DSM 4299 / JCM 9571 / NBRC 15438 / GSS1).